The following is a 192-amino-acid chain: Ion-translocating oxidoreductase complex subunit A (192 aa).

The next 6 membrane-spanning stretches (helical) occupy residues isoleucine 5 to leucine 25, valine 39 to valine 59, isoleucine 63 to valine 83, leucine 102 to leucine 122, valine 134 to leucine 154, and serine 171 to valine 191.

The protein belongs to the NqrDE/RnfAE family. In terms of assembly, the complex is composed of six subunits: RnfA, RnfB, RnfC, RnfD, RnfE and RnfG.

It localises to the cell inner membrane. Its function is as follows. Part of a membrane-bound complex that couples electron transfer with translocation of ions across the membrane. The protein is Ion-translocating oxidoreductase complex subunit A of Haemophilus influenzae (strain ATCC 51907 / DSM 11121 / KW20 / Rd).